The following is a 314-amino-acid chain: Splicing factor YJU2 (314 aa).

Residues Cys-43, Cys-46, Cys-80, and Cys-83 each coordinate Zn(2+). Disordered regions lie at residues 178-238 and 253-314; these read MSQE…NEVP and LAGL…DSDS. The segment covering 200–209 has biased composition (basic and acidic residues); the sequence is EEARHRRLLE. Ser-211, Ser-213, and Ser-220 each carry phosphoserine. A compositionally biased stretch (low complexity) spans 222 to 232; the sequence is PRAAARPNPTA. Residues 290–302 show a composition bias toward polar residues; sequence PTPQTPGTSSLSQ. Phosphoserine is present on residues Ser-309, Ser-312, and Ser-314.

This sequence belongs to the CWC16 family. YJU2 subfamily. As to quaternary structure, component of the spliceosome. Present in the activated B complex, the catalytically activated B* complex which catalyzes the branching, the catalytic step 1 C complex catalyzing the exon ligation, and the postcatalytic P complex containing the ligated exons (mRNA) and the excised lariat intron.

Its subcellular location is the nucleus. In terms of biological role, part of the spliceosome which catalyzes two sequential transesterification reactions, first the excision of the non-coding intron from pre-mRNA and then the ligation of the coding exons to form the mature mRNA. Plays a role in stabilizing the structure of the spliceosome catalytic core and docking of the branch helix into the active site, producing 5'-exon and lariat intron-3'-intermediates. May protect cells from TP53-dependent apoptosis upon dsDNA break damage through association with PRP19-CD5L complex. In Mus musculus (Mouse), this protein is Splicing factor YJU2.